Reading from the N-terminus, the 72-residue chain is Translation initiation factor IF-1 (72 aa).

Positions 1–72 (MAKQSAIEQD…SKGRIVFRYK (72 aa)) constitute an S1-like domain.

This sequence belongs to the IF-1 family. As to quaternary structure, component of the 30S ribosomal translation pre-initiation complex which assembles on the 30S ribosome in the order IF-2 and IF-3, IF-1 and N-formylmethionyl-tRNA(fMet); mRNA recruitment can occur at any time during PIC assembly.

It is found in the cytoplasm. Its function is as follows. One of the essential components for the initiation of protein synthesis. Stabilizes the binding of IF-2 and IF-3 on the 30S subunit to which N-formylmethionyl-tRNA(fMet) subsequently binds. Helps modulate mRNA selection, yielding the 30S pre-initiation complex (PIC). Upon addition of the 50S ribosomal subunit IF-1, IF-2 and IF-3 are released leaving the mature 70S translation initiation complex. The protein is Translation initiation factor IF-1 of Bacteroides fragilis (strain ATCC 25285 / DSM 2151 / CCUG 4856 / JCM 11019 / LMG 10263 / NCTC 9343 / Onslow / VPI 2553 / EN-2).